The sequence spans 152 residues: Proteolipid protein 2 (152 aa).

An MARVEL domain is found at 19–138; that stretch reads FSRTKKGILL…DAYITFPLKQ (120 aa). 4 helical membrane passes run 25–45, 48–68, 85–105, and 112–132; these read GILLFAEIILCLVILICFSAS, SAYSSLSVIEMICAAVLLVFY, DFFRSLIATILYLITSIVVLV, and RVVAGILGLLATLLFGYDAYI.

It localises to the membrane. May play a role in cell differentiation in the intestinal epithelium. The polypeptide is Proteolipid protein 2 (Plp2) (Mus musculus (Mouse)).